Consider the following 1583-residue polypeptide: Methyl-CpG-binding domain protein 5/6 homolog sba (1583 aa).

The disordered stretch occupies residues 81–115 (AVHQQQQQHHHQQQQQQQHQQQQQILPAGLVNGNG). The span at 83-104 (HQQQQQHHHQQQQQQQHQQQQQ) shows a compositional bias: low complexity. One can recognise an MBD domain in the interval 238–308 (RKTATSYNGN…YLFDFNAQVP (71 aa)). Disordered regions lie at residues 427 to 457 (NKLP…PTSQ), 556 to 579 (EPIV…QQQL), 630 to 694 (VTLV…QTQV), 839 to 862 (AELH…AASS), 940 to 980 (PPAQ…ISPQ), 1179 to 1247 (VMSR…RSIC), and 1287 to 1339 (QESP…SFPL). The span at 430–439 (PATNRTATTP) shows a compositional bias: low complexity. Positions 440–449 (TPAPTPPPQH) are enriched in pro residues. Residues 563–579 (QQQQQQQQQQLQQQQQL) are compositionally biased toward low complexity. Residues 658-677 (AISTSHESPRQSLSSPTDSV) show a composition bias toward polar residues. 2 stretches are compositionally biased toward low complexity: residues 679–693 (SAKS…PQTQ) and 851–862 (VSQPSPVAAASS). Composition is skewed to polar residues over residues 1179 to 1195 (VMSR…TTTC), 1216 to 1240 (CVSS…PSST), and 1287 to 1313 (QESP…TVRT). A compositionally biased stretch (low complexity) spans 1323-1333 (RGAARAAPSAS). One can recognise a PWWP domain in the interval 1346 to 1408 (IGELIWGPAR…VNSLQSLSEG (63 aa)). A coiled-coil region spans residues 1415-1446 (AQKDTRKSRKLNSQLERAIQEAMTELDNISAS). Residues 1471 to 1497 (IGGQQQYQQQQQQQQQQQSPSSTNNKI) are disordered. Residues 1474-1488 (QQQYQQQQQQQQQQQ) are compositionally biased toward low complexity.

Component of the polycomb repressive deubiquitinase (PR-DUB) complex, at least composed of caly/calypso, Asx and sba (MDB5/6 homolog). Interacts (via MBD domain) with Asx (via PHD domain); the interaction is important for the stability of the PR-DUB complex.

Functionally, non-catalytic component of the polycomb repressive deubiquitinase (PR-DUB) complex, a complex that specifically mediates deubiquitination of histone H2A monoubiquitinated at 'Lys-119' (H2AK118ub1). Important for maintaining stability of the PR-DUB complex. Probable epigenetic regulator involved in developmental pattern formation and eye development. This Drosophila melanogaster (Fruit fly) protein is Methyl-CpG-binding domain protein 5/6 homolog sba.